Here is a 182-residue protein sequence, read N- to C-terminus: Small ribosomal subunit protein uS9 (182 aa).

Belongs to the universal ribosomal protein uS9 family.

The polypeptide is Small ribosomal subunit protein uS9 (Corynebacterium glutamicum (strain R)).